The primary structure comprises 374 residues: Methylthioribose-1-phosphate isomerase (374 aa).

D251 acts as the Proton donor in catalysis.

It belongs to the eIF-2B alpha/beta/delta subunits family. MtnA subfamily.

The protein resides in the cytoplasm. It localises to the nucleus. It carries out the reaction 5-(methylsulfanyl)-alpha-D-ribose 1-phosphate = 5-(methylsulfanyl)-D-ribulose 1-phosphate. It participates in amino-acid biosynthesis; L-methionine biosynthesis via salvage pathway; L-methionine from S-methyl-5-thio-alpha-D-ribose 1-phosphate: step 1/6. In terms of biological role, catalyzes the interconversion of methylthioribose-1-phosphate (MTR-1-P) into methylthioribulose-1-phosphate (MTRu-1-P). The sequence is that of Methylthioribose-1-phosphate isomerase (IDI2) from Oryza sativa subsp. japonica (Rice).